The primary structure comprises 156 residues: Small ribosomal subunit protein uS7 (156 aa).

This sequence belongs to the universal ribosomal protein uS7 family. Part of the 30S ribosomal subunit. Contacts proteins S9 and S11.

Its function is as follows. One of the primary rRNA binding proteins, it binds directly to 16S rRNA where it nucleates assembly of the head domain of the 30S subunit. Is located at the subunit interface close to the decoding center, probably blocks exit of the E-site tRNA. The polypeptide is Small ribosomal subunit protein uS7 (Bordetella petrii (strain ATCC BAA-461 / DSM 12804 / CCUG 43448)).